Here is a 71-residue protein sequence, read N- to C-terminus: Conotoxin Tx11.3 (71 aa).

The first 19 residues, 1 to 19 (MKLCVTFLLVLVILPSVTG), serve as a signal peptide directing secretion. Residues 20-47 (VKSSERTLSGAALRGDRGTCSGRGQECK) constitute a propeptide that is removed on maturation. Intrachain disulfides connect Cys39/Cys53, Cys46/Cys58, Cys52/Cys63, and Cys57/Cys70.

This sequence belongs to the I1 superfamily. Expressed by the venom duct.

The protein localises to the secreted. In Conus textile (Cloth-of-gold cone), this protein is Conotoxin Tx11.3.